The sequence spans 132 residues: Large-conductance mechanosensitive channel (132 aa).

The next 3 helical transmembrane spans lie at Val14–Leu34, Ile38–Gly58, and Gly67–Val87.

Belongs to the MscL family. As to quaternary structure, homopentamer.

Its subcellular location is the cell membrane. In terms of biological role, channel that opens in response to stretch forces in the membrane lipid bilayer. May participate in the regulation of osmotic pressure changes within the cell. The sequence is that of Large-conductance mechanosensitive channel from Bacillus cereus (strain B4264).